The chain runs to 494 residues: UPF0371 protein SEQ_1471 (494 aa).

Belongs to the UPF0371 family.

This Streptococcus equi subsp. equi (strain 4047) protein is UPF0371 protein SEQ_1471.